Reading from the N-terminus, the 1158-residue chain is ATP-dependent helicase/deoxyribonuclease subunit B (1158 aa).

8–15 (GRAGTGKS) is a binding site for ATP. 4 residues coordinate [4Fe-4S] cluster: cysteine 791, cysteine 1112, cysteine 1115, and cysteine 1121.

This sequence belongs to the helicase family. AddB/RexB type 1 subfamily. Heterodimer of AddA and AddB. The cofactor is Mg(2+). [4Fe-4S] cluster is required as a cofactor.

The heterodimer acts as both an ATP-dependent DNA helicase and an ATP-dependent, dual-direction single-stranded exonuclease. Recognizes the chi site generating a DNA molecule suitable for the initiation of homologous recombination. The AddB subunit has 5' -&gt; 3' nuclease activity but not helicase activity. This is ATP-dependent helicase/deoxyribonuclease subunit B from Clostridium perfringens (strain SM101 / Type A).